The primary structure comprises 632 residues: tRNA uridine 5-carboxymethylaminomethyl modification enzyme MnmG (632 aa).

FAD contacts are provided by residues 13–18 (GGGHAG), Val125, and Ser180. 273-287 (GPRYCPSIEDKINRF) contributes to the NAD(+) binding site. Gln370 is an FAD binding site.

It belongs to the MnmG family. As to quaternary structure, homodimer. Heterotetramer of two MnmE and two MnmG subunits. It depends on FAD as a cofactor.

The protein localises to the cytoplasm. Functionally, NAD-binding protein involved in the addition of a carboxymethylaminomethyl (cmnm) group at the wobble position (U34) of certain tRNAs, forming tRNA-cmnm(5)s(2)U34. The polypeptide is tRNA uridine 5-carboxymethylaminomethyl modification enzyme MnmG (Shewanella sediminis (strain HAW-EB3)).